The following is a 348-amino-acid chain: Histidinol-phosphate aminotransferase (348 aa).

K210 bears the N6-(pyridoxal phosphate)lysine mark.

It belongs to the class-II pyridoxal-phosphate-dependent aminotransferase family. Histidinol-phosphate aminotransferase subfamily. Homodimer. The cofactor is pyridoxal 5'-phosphate.

It carries out the reaction L-histidinol phosphate + 2-oxoglutarate = 3-(imidazol-4-yl)-2-oxopropyl phosphate + L-glutamate. It functions in the pathway amino-acid biosynthesis; L-histidine biosynthesis; L-histidine from 5-phospho-alpha-D-ribose 1-diphosphate: step 7/9. The sequence is that of Histidinol-phosphate aminotransferase from Pseudomonas putida (strain W619).